A 236-amino-acid polypeptide reads, in one-letter code: Demethylmenaquinone methyltransferase (236 aa).

S-adenosyl-L-methionine contacts are provided by residues Thr-62, Asp-80, 107–108, and Ser-124; that span reads DA.

It belongs to the class I-like SAM-binding methyltransferase superfamily. MenG/UbiE family.

The enzyme catalyses a 2-demethylmenaquinol + S-adenosyl-L-methionine = a menaquinol + S-adenosyl-L-homocysteine + H(+). The protein operates within quinol/quinone metabolism; menaquinone biosynthesis; menaquinol from 1,4-dihydroxy-2-naphthoate: step 2/2. Its function is as follows. Methyltransferase required for the conversion of demethylmenaquinol (DMKH2) to menaquinol (MKH2). This Thermobifida fusca (strain YX) protein is Demethylmenaquinone methyltransferase.